Consider the following 317-residue polypeptide: Protein lifeguard 2 (317 aa).

The disordered stretch occupies residues 1-54; sequence MTQGKLSVANKAPGTEGQQHQANGEKKDAPAVPSAPPSYEEATSGEGLKAGTFP. The next 3 membrane-spanning stretches (helical) occupy residues 107 to 127, 139 to 159, and 166 to 186; these read VYTILLVQLLVTLAVVALFTF, PGWYWASYAVFFATYLTLACC, and FPWNLILLTIFTLSMAYLTGM. Residue Asn192 is glycosylated (N-linked (GlcNAc...) asparagine). Helical transmembrane passes span 195-215, 226-246, 252-272, and 291-311; these read SVLLCLVITALVCLSVTIFSF, GVLFVLLMTLFFSGLLLAVLL, PWLHAVYAVLGAGVFTLFLAF, and IFGALNIYLDIIYIFTFFLQL.

It belongs to the BI1 family. LFG subfamily. As to quaternary structure, interacts with FAS/TNFRSF6 and BAX. In terms of tissue distribution, brain. Highly expressed in cerebellum, also found in cortex, olfactory bulb, and hippocampus.

The protein resides in the cell membrane. Its subcellular location is the membrane raft. The protein localises to the postsynaptic cell membrane. In terms of biological role, antiapoptotic protein which protects cells uniquely from Fas-induced apoptosis. Regulates Fas-mediated apoptosis in neurons by interfering with caspase-8 activation. Plays a role in cerebellar development by affecting cerebellar size, internal granular layer (IGL) thickness, and Purkinje cell (PC) development. The protein is Protein lifeguard 2 (Faim2) of Mus musculus (Mouse).